The sequence spans 225 residues: Histone H1.11L (225 aa).

Low complexity-rich tracts occupy residues 1–23 and 31–43; these read MSET…PAKA and AAGG…PAGP. Disordered regions lie at residues 1 to 46 and 94 to 225; these read MSET…PSVT and SKGT…AKKK. An N-acetylserine modification is found at serine 2. Positions 41 to 114 constitute an H15 domain; the sequence is AGPSVTELIT…GASGSFRLSK (74 aa). 4 stretches are compositionally biased toward basic residues: residues 123 to 138, 146 to 163, 171 to 189, and 198 to 225; these read APKK…KPAA, KKPK…KAKK, KSAK…KKAV, and KAVK…AKKK.

This sequence belongs to the histone H1/H5 family.

The protein resides in the nucleus. It localises to the chromosome. Histones H1 are necessary for the condensation of nucleosome chains into higher-order structures. The protein is Histone H1.11L of Gallus gallus (Chicken).